We begin with the raw amino-acid sequence, 205 residues long: Pyrrolidone-carboxylate peptidase (205 aa).

Residues Glu79, Cys142, and His165 contribute to the active site.

It belongs to the peptidase C15 family. As to quaternary structure, homotetramer.

It is found in the cytoplasm. The catalysed reaction is Release of an N-terminal pyroglutamyl group from a polypeptide, the second amino acid generally not being Pro.. In terms of biological role, removes 5-oxoproline from various penultimate amino acid residues except L-proline. The sequence is that of Pyrrolidone-carboxylate peptidase from Gloeobacter violaceus (strain ATCC 29082 / PCC 7421).